The sequence spans 412 residues: Serine hydroxymethyltransferase (412 aa).

Residues Leu-117 and Gly-121–Leu-123 contribute to the (6S)-5,6,7,8-tetrahydrofolate site. Lys-226 bears the N6-(pyridoxal phosphate)lysine mark. Residue Glu-241 participates in (6S)-5,6,7,8-tetrahydrofolate binding.

Belongs to the SHMT family. Homodimer. It depends on pyridoxal 5'-phosphate as a cofactor.

It is found in the cytoplasm. It catalyses the reaction (6R)-5,10-methylene-5,6,7,8-tetrahydrofolate + glycine + H2O = (6S)-5,6,7,8-tetrahydrofolate + L-serine. It participates in one-carbon metabolism; tetrahydrofolate interconversion. The protein operates within amino-acid biosynthesis; glycine biosynthesis; glycine from L-serine: step 1/1. Catalyzes the reversible interconversion of serine and glycine with tetrahydrofolate (THF) serving as the one-carbon carrier. This reaction serves as the major source of one-carbon groups required for the biosynthesis of purines, thymidylate, methionine, and other important biomolecules. Also exhibits THF-independent aldolase activity toward beta-hydroxyamino acids, producing glycine and aldehydes, via a retro-aldol mechanism. The protein is Serine hydroxymethyltransferase of Staphylococcus carnosus (strain TM300).